Here is a 494-residue protein sequence, read N- to C-terminus: Ketol-acid reductoisomerase (NADP(+)) (494 aa).

Residues 14-208 (LDQIGRCRFM…GGDRAGVLES (195 aa)) enclose the KARI N-terminal Rossmann domain. NADP(+) contacts are provided by residues 45-48 (CGAQ), arginine 68, arginine 76, serine 78, and 108-110 (DKQ). The active site involves histidine 132. Glycine 158 serves as a coordination point for NADP(+). 2 KARI C-terminal knotted domains span residues 209–344 (SFVA…NAPE) and 345–487 (YNGK…MTDM). The Mg(2+) site is built by aspartate 217, glutamate 221, glutamate 389, and glutamate 393. Serine 414 contributes to the substrate binding site.

This sequence belongs to the ketol-acid reductoisomerase family. Requires Mg(2+) as cofactor.

The catalysed reaction is (2R)-2,3-dihydroxy-3-methylbutanoate + NADP(+) = (2S)-2-acetolactate + NADPH + H(+). It catalyses the reaction (2R,3R)-2,3-dihydroxy-3-methylpentanoate + NADP(+) = (S)-2-ethyl-2-hydroxy-3-oxobutanoate + NADPH + H(+). Its pathway is amino-acid biosynthesis; L-isoleucine biosynthesis; L-isoleucine from 2-oxobutanoate: step 2/4. It participates in amino-acid biosynthesis; L-valine biosynthesis; L-valine from pyruvate: step 2/4. Functionally, involved in the biosynthesis of branched-chain amino acids (BCAA). Catalyzes an alkyl-migration followed by a ketol-acid reduction of (S)-2-acetolactate (S2AL) to yield (R)-2,3-dihydroxy-isovalerate. In the isomerase reaction, S2AL is rearranged via a Mg-dependent methyl migration to produce 3-hydroxy-3-methyl-2-ketobutyrate (HMKB). In the reductase reaction, this 2-ketoacid undergoes a metal-dependent reduction by NADPH to yield (R)-2,3-dihydroxy-isovalerate. This is Ketol-acid reductoisomerase (NADP(+)) from Pseudoalteromonas atlantica (strain T6c / ATCC BAA-1087).